Consider the following 540-residue polypeptide: Telomerase Cajal body protein 1 (540 aa).

Pro residues predominate over residues 1–10 (MKTPEAPPLA). The tract at residues 1-126 (MKTPEAPPLA…GEDVEGVSEE (126 aa)) is disordered. S26, S30, S54, S64, S85, and S90 each carry phosphoserine. The segment covering 116-126 (PGEDVEGVSEE) has biased composition (acidic residues). WD repeat units lie at residues 158–197 (QPEN…YNEG), 213–258 (EGDT…LRAS), 263–304 (NHLD…RDCE), 314–355 (GQSG…ALLG), 356–396 (GHQG…HPLW), and 402–441 (VTTN…LESK). T480 carries the phosphothreonine modification. S482 carries the phosphoserine modification. The interval 520–540 (SDAHQEEMGQGRTEGGGGEFT) is disordered. Gly residues predominate over residues 531–540 (RTEGGGGEFT).

This sequence belongs to the TCAB1 family. In terms of assembly, component of the telomerase holoenzyme complex composed of one molecule of TERT, one molecule of WRAP53/TCAB1, two molecules of H/ACA ribonucleoprotein complex subunits DKC1, NOP10, NHP2 and GAR1, and a telomerase RNA template component (TERC). The telomerase holoenzyme complex is associated with TEP1, SMG6/EST1A and POT1. Interacts with the chaperonin-containing T-complex (TRiC) complex; which mediates the folding of WRAP53/TCAB1. Interacts with COIL. Interacts with SMN1. Interacts with RNF8. Interacts with histone H2AX. In terms of processing, phosphorylated at Ser-64 by ATM in response to DNA damage, promoting its interaction with histone H2AX and localization to sites of DNA double-strand breaks.

The protein localises to the nucleus. It is found in the cajal body. It localises to the chromosome. Its subcellular location is the telomere. Its function is as follows. RNA chaperone that plays a key role in telomere maintenance and RNA localization to Cajal bodies. Specifically recognizes and binds the Cajal body box (CAB box) present in both small Cajal body RNAs (scaRNAs) and telomerase RNA template component (TERC). Essential component of the telomerase holoenzyme complex, a ribonucleoprotein complex essential for the replication of chromosome termini that elongates telomeres in most eukaryotes. In the telomerase holoenzyme complex, required to stimulate the catalytic activity of the complex. Acts by specifically binding the CAB box of the TERC RNA and controlling the folding of the CR4/CR5 region of the TERC RNA, a critical step for telomerase activity. In addition, also controls telomerase holoenzyme complex localization to Cajal body. During S phase, required for delivery of TERC to telomeres during S phase and for telomerase activity. In addition to its role in telomere maintenance, also required for Cajal body formation, probably by mediating localization of scaRNAs to Cajal bodies. Also plays a role in DNA repair: phosphorylated by ATM in response to DNA damage and relocalizes to sites of DNA double-strand breaks to promote the repair of DNA double-strand breaks. Acts by recruiting the ubiquitin ligase RNF8 to DNA breaks and promote both homologous recombination (HR) and non-homologous end joining (NHEJ). This chain is Telomerase Cajal body protein 1, found in Bos taurus (Bovine).